The sequence spans 727 residues: Cyclin-T1 (727 aa).

Position 117 is a phosphoserine (Ser117). Positions 253–270 match the Nuclear localization signal, and interaction with Tat-TAR RNA motif; the sequence is KRIRNWRACQAAKKTKAD. The span at 302–322 shows a compositional bias: low complexity; sequence MSTSSTTSTVPSLPTTEESSS. Residues 302–326 are disordered; the sequence is MSTSSTTSTVPSLPTTEESSSNLSG. A Glycyl lysine isopeptide (Lys-Gly) (interchain with G-Cter in SUMO2) cross-link involves residue Lys343. Residues 386–427 are a coiled coil; the sequence is SAKVSLKEYRAKHAEELAAQKRQLENMEANVKSQYAYAAQNL. Position 390 is a phosphoserine (Ser390). Lys392 bears the N6-acetyllysine mark. Residue Lys417 forms a Glycyl lysine isopeptide (Lys-Gly) (interchain with G-Cter in SUMO2) linkage. 3 positions are modified to ADP-ribosylserine: Ser418, Ser476, and Ser477. The histidine-rich domain (HRD) stretch occupies residues 482–552; the sequence is IKMRIKVHAA…RPGDPKHSSQ (71 aa). A Glycyl lysine isopeptide (Lys-Gly) (interchain with G-Cter in SUMO2) cross-link involves residue Lys483. The segment covering 486–508 has biased composition (basic and acidic residues); it reads IKVHAAPDKHNSIDDSVTKSREH. Disordered stretches follow at residues 486-591 and 692-727; these read IKVH…DHPA and LNPR…PLPK. The residue at position 487 (Lys487) is an N6-(ADP-ribosyl)lysine. His489 carries the post-translational modification ADP-ribosylhistidine. Residues Ser497 and Ser501 each carry the phosphoserine modification. The segment covering 509-532 has biased composition (basic residues); it reads KEKHKTHPSNHHHHHNHHSHKHSH. His532 carries the ADP-ribosylhistidine modification. ADP-ribosylserine is present on residues Ser533, Ser551, and Ser554. His558 carries the ADP-ribosylhistidine modification. Low complexity predominate over residues 562–572; that stretch reads SLSSSFSSSSS. At Ser565 the chain carries ADP-ribosylserine. The residue at position 566 (Ser566) is a Phosphoserine. Pro residues predominate over residues 711 to 727; that stretch reads LPPLPSEPPPPLPPLPK.

The protein belongs to the cyclin family. Cyclin C subfamily. As to quaternary structure, cyclin-T1 is the predominant cyclin that associates with CDK9 to form a heterodimer called P-TEFb. P-TEFb forms a complex with AFF4/AF5Q31. Component of a complex which is at least composed of HTATSF1/Tat-SF1, P-TEFb complex, RNA pol II, SUPT5H, and NCL/nucleolin. Component of the 7SK snRNP complex at least composed of P-TEFb (composed of CDK9 and CCNT1/cyclin-T1), HEXIM1, HEXIM2, BCDIN3, SART3 proteins and 7SK and U6 snRNAs. Interacts (via central region) with ZMYND8 (via N-terminus); the interaction is direct and the association appears to occur between homodimeric ZMYND8 and the activated form of the P-TEFb complex. Interacts with BRD4, targets chromatin binding. Interacts with JMJD6. Interacts with MDFIC. Interacts with HSF1. Interacts with HTATSF1. Interacts with TBX21. ADP-ribosylation on serine residues by PARP1 in response to DNA damage disrupts the phase separation activity of CCNT1, thereby preventing activation of CDK9.

The protein resides in the nucleus. Regulatory subunit of the cyclin-dependent kinase pair (CDK9/cyclin-T1) complex, also called positive transcription elongation factor B (P-TEFb), which facilitates the transition from abortive to productive elongation by phosphorylating the CTD (C-terminal domain) of the large subunit of RNA polymerase II (RNA Pol II). Required to activate the protein kinase activity of CDK9: acts by mediating formation of liquid-liquid phase separation (LLPS) that enhances binding of P-TEFb to the CTD of RNA Pol II. This is Cyclin-T1 (CCNT1) from Equus caballus (Horse).